Consider the following 431-residue polypeptide: Reticulon-like protein B17 (431 aa).

2 disordered regions span residues 1–110 (MEST…SEAV) and 126–152 (PPRK…SSSD). Polar residues predominate over residues 12-26 (TKSASRLQDSSNPPN). The segment covering 126–138 (PPRKRKTNGRPKK) has biased composition (basic residues). A compositionally biased stretch (polar residues) spans 142–152 (SSAPPLCSSSD). The Reticulon domain maps to 168-355 (ISDLVMWRDV…VTAFWNLTSI (188 aa)). The next 4 helical transmembrane spans lie at 177 to 197 (VAKS…SCFA), 202 to 222 (FSVF…SFLS), 286 to 306 (YGHL…SFTI), and 349 to 369 (FWNL…LVIF). Positions 382-415 (EVEPVENEQEEETLPQEEETVPQEEETVPQEEEQ) are enriched in acidic residues. The interval 382 to 422 (EVEPVENEQEEETLPQEEETVPQEEETVPQEEEQTQPSEER) is disordered.

It localises to the endoplasmic reticulum membrane. The polypeptide is Reticulon-like protein B17 (RTNLB17) (Arabidopsis thaliana (Mouse-ear cress)).